We begin with the raw amino-acid sequence, 269 residues long: Tryptophan synthase alpha chain (269 aa).

Catalysis depends on proton acceptor residues glutamate 49 and aspartate 60.

Belongs to the TrpA family. Tetramer of two alpha and two beta chains.

It catalyses the reaction (1S,2R)-1-C-(indol-3-yl)glycerol 3-phosphate + L-serine = D-glyceraldehyde 3-phosphate + L-tryptophan + H2O. The protein operates within amino-acid biosynthesis; L-tryptophan biosynthesis; L-tryptophan from chorismate: step 5/5. The alpha subunit is responsible for the aldol cleavage of indoleglycerol phosphate to indole and glyceraldehyde 3-phosphate. The chain is Tryptophan synthase alpha chain from Acidovorax ebreus (strain TPSY) (Diaphorobacter sp. (strain TPSY)).